The sequence spans 518 residues: Probable pectinesterase/pectinesterase inhibitor 16 (518 aa).

An N-terminal signal peptide occupies residues 1–33 (MASSSSISNHKIPNTLMFLVIVNFLYLIQTNSA). A pectinesterase inhibitor 16 region spans residues 30–172 (TNSAVSISSN…TGLLTSSLDL (143 aa)). N82 and N161 each carry an N-linked (GlcNAc...) asparagine glycan. Positions 213 to 502 (DAVVAPDGSG…FTVASFIDGN (290 aa)) are pectinesterase 16. Residues T289 and Q319 each coordinate substrate. The Proton donor; for pectinesterase activity role is filled by D342. D363 acts as the Nucleophile; for pectinesterase activity in catalysis. Substrate-binding residues include R422 and W424.

The protein in the N-terminal section; belongs to the PMEI family. It in the C-terminal section; belongs to the pectinesterase family. Expressed in siliques and floral stems.

It is found in the secreted. It localises to the cell wall. The catalysed reaction is [(1-&gt;4)-alpha-D-galacturonosyl methyl ester](n) + n H2O = [(1-&gt;4)-alpha-D-galacturonosyl](n) + n methanol + n H(+). It functions in the pathway glycan metabolism; pectin degradation; 2-dehydro-3-deoxy-D-gluconate from pectin: step 1/5. In terms of biological role, acts in the modification of cell walls via demethylesterification of cell wall pectin. The polypeptide is Probable pectinesterase/pectinesterase inhibitor 16 (PME16) (Arabidopsis thaliana (Mouse-ear cress)).